Here is a 422-residue protein sequence, read N- to C-terminus: Enolase (422 aa).

A (2R)-2-phosphoglycerate-binding site is contributed by Gln162. The active-site Proton donor is the Glu204. Mg(2+) is bound by residues Asp241, Glu284, and Asp311. Residues Lys336, Arg365, Ser366, and Lys387 each contribute to the (2R)-2-phosphoglycerate site. Lys336 (proton acceptor) is an active-site residue.

Belongs to the enolase family. As to quaternary structure, component of the RNA degradosome, a multiprotein complex involved in RNA processing and mRNA degradation. Mg(2+) is required as a cofactor.

It is found in the cytoplasm. Its subcellular location is the secreted. The protein resides in the cell surface. It catalyses the reaction (2R)-2-phosphoglycerate = phosphoenolpyruvate + H2O. Its pathway is carbohydrate degradation; glycolysis; pyruvate from D-glyceraldehyde 3-phosphate: step 4/5. In terms of biological role, catalyzes the reversible conversion of 2-phosphoglycerate (2-PG) into phosphoenolpyruvate (PEP). It is essential for the degradation of carbohydrates via glycolysis. This is Enolase from Legionella pneumophila (strain Corby).